Reading from the N-terminus, the 1390-residue chain is Hepatocyte growth factor receptor (1390 aa).

The first 24 residues, 1 to 24, serve as a signal peptide directing secretion; sequence MKAPAVLAPGILVLLFTLVQRSNG. At 25–932 the chain is on the extracellular side; sequence ECKEALAKSE…VIVQPDQNFT (908 aa). One can recognise a Sema domain in the interval 27 to 515; sequence KEALAKSEMN…TGKKITKIPL (489 aa). Asparagine 45 carries N-linked (GlcNAc...) asparagine glycosylation. 4 disulfides stabilise this stretch: cysteine 95-cysteine 101, cysteine 98-cysteine 160, cysteine 133-cysteine 141, and cysteine 172-cysteine 175. Asparagine 106 carries N-linked (GlcNAc...) asparagine glycosylation. Asparagine 149 carries N-linked (GlcNAc...) asparagine glycosylation. N-linked (GlcNAc...) asparagine glycosylation occurs at asparagine 202. Intrachain disulfides connect cysteine 298-cysteine 363 and cysteine 385-cysteine 397. N-linked (GlcNAc...) asparagine glycans are attached at residues asparagine 399 and asparagine 405. 4 cysteine pairs are disulfide-bonded: cysteine 520–cysteine 538, cysteine 526–cysteine 561, cysteine 529–cysteine 545, and cysteine 541–cysteine 551. 3 IPT/TIG domains span residues 563 to 655, 657 to 739, and 742 to 836; these read PAIY…FSYV, PVIT…FSYR, and PIVY…LIYV. An O-linked (Man) threonine glycan is attached at threonine 582. N-linked (GlcNAc...) asparagine glycans are attached at residues asparagine 607 and asparagine 635. O-linked (Man) threonine glycosylation is found at threonine 676 and threonine 761. N-linked (GlcNAc...) asparagine glycans are attached at residues asparagine 785, asparagine 879, and asparagine 930. A helical transmembrane segment spans residues 933–955; that stretch reads GLIAGVVSISIALLLLLGFFLWL. The Cytoplasmic segment spans residues 956–1390; it reads KKRKQIKDLG…TRPASFWETS (435 aa). Position 966 is a phosphoserine (serine 966). Threonine 977 bears the Phosphothreonine mark. Serine 990, serine 997, and serine 1000 each carry phosphoserine. Tyrosine 1003 is subject to Phosphotyrosine. In terms of domain architecture, Protein kinase spans 1078–1345; sequence VHFNEVIGRG…RISAIFSTFI (268 aa). Residues 1084 to 1092 and lysine 1110 contribute to the ATP site; that span reads IGRGHFGCV. Aspartate 1204 (proton acceptor) is an active-site residue. The interaction with RANBP9 stretch occupies residues 1212–1390; the sequence is LDEKFTVKVA…TRPASFWETS (179 aa). Tyrosine 1230 carries the phosphotyrosine modification. Phosphotyrosine; by autocatalysis is present on residues tyrosine 1234 and tyrosine 1235. The residue at position 1289 (threonine 1289) is a Phosphothreonine. Positions 1320–1359 are interaction with MUC20; it reads WHPKAEMRPSFSELVSRISAIFSTFIGEHYVHVNATYVNV. Tyrosine 1349 and tyrosine 1356 each carry phosphotyrosine; by autocatalysis. A Phosphotyrosine modification is found at tyrosine 1365.

The protein belongs to the protein kinase superfamily. Tyr protein kinase family. As to quaternary structure, heterodimer made of an alpha chain (50 kDa) and a beta chain (145 kDa) which are disulfide linked. Binds PLXNB1. Interacts when phosphorylated with downstream effectors including STAT3, PIK3R1, SRC, PCLG1, GRB2 and GAB1. Interacts with SPSB1, SPSB2 and SPSB4. Interacts with INPP5D/SHIP1. When phosphorylated at Tyr-1356, interacts with INPPL1/SHIP2. Interacts with RANBP9 and RANBP10, as well as SPSB1, SPSB2, SPSB3 and SPSB4. SPSB1 binding occurs in the presence and in the absence of HGF, however HGF treatment has a positive effect on this interaction. Interacts with MUC20; prevents interaction with GRB2 and suppresses hepatocyte growth factor-induced cell proliferation. Interacts with GRB10. Interacts with PTPN1 and PTPN2. Interacts with HSP90AA1 and HSP90AB1; the interaction suppresses MET kinase activity. Interacts with tensin TNS3. Interacts (when phosphorylated) with tensin TNS4 (via SH2 domain); the interaction increases MET protein stability by inhibiting MET endocytosis and subsequent lysosomal degradation. Autophosphorylated in response to ligand binding on Tyr-1234 and Tyr-1235 in the kinase domain leading to further phosphorylation of Tyr-1349 and Tyr-1356 in the C-terminal multifunctional docking site. Dephosphorylated by PTPRJ at Tyr-1349 and Tyr-1365. Dephosphorylated by PTPN1 and PTPN2. In terms of processing, ubiquitinated. Ubiquitination by CBL regulates the receptor stability and activity through proteasomal degradation. Post-translationally, O-mannosylation of IPT/TIG domains by TMEM260 is required for protein maturation. O-mannosylated residues are composed of single mannose glycans that are not elongated or modified.

Its subcellular location is the membrane. It catalyses the reaction L-tyrosyl-[protein] + ATP = O-phospho-L-tyrosyl-[protein] + ADP + H(+). With respect to regulation, in its inactive state, the C-terminal tail interacts with the catalytic domain and inhibits the kinase activity. Upon ligand binding, the C-terminal tail is displaced and becomes phosphorylated, thus increasing the kinase activity. In terms of biological role, receptor tyrosine kinase that transduces signals from the extracellular matrix into the cytoplasm by binding to hepatocyte growth factor/HGF ligand. Regulates many physiological processes including proliferation, scattering, morphogenesis and survival. Ligand binding at the cell surface induces autophosphorylation of MET on its intracellular domain that provides docking sites for downstream signaling molecules. Following activation by ligand, interacts with the PI3-kinase subunit PIK3R1, PLCG1, SRC, GRB2, STAT3 or the adapter GAB1. Recruitment of these downstream effectors by MET leads to the activation of several signaling cascades including the RAS-ERK, PI3 kinase-AKT, or PLCgamma-PKC. The RAS-ERK activation is associated with the morphogenetic effects while PI3K/AKT coordinates prosurvival effects. During embryonic development, MET signaling plays a role in gastrulation, development and migration of muscles and neuronal precursors, angiogenesis and kidney formation. In adults, participates in wound healing as well as organ regeneration and tissue remodeling. Also promotes differentiation and proliferation of hematopoietic cells. The protein is Hepatocyte growth factor receptor (MET) of Pongo abelii (Sumatran orangutan).